The chain runs to 324 residues: MEIRVANKYALGKKLGSGSFGDIYVAKDIVTMEEFAVKLESTRSKHPQLLYESKLYKILGGGIGVPKVYWYGIEGDFTIMVLDLLGPSLEDLFTLCNRKFSLKTVRMTADQMLNRIEYVHSKNFIHRDIKPDNFLIGRGKKVTLIHIIDFGLAKKYRDSRSHTSYPYKEGKNLTGTARYASINTHLGIEQSRRDDIEALGYVLMYFLRGSLPWQGLKAISKKDKYDKIMEKKISTSVEVLCRNASFEFVTYLNYCRSLRFEDRPDYTYLRRLLKDLFIREGFTYDFLFDWTCVYASEKDKKKMLENKNRFDQTADQEGRDQRNN.

Residues 9 to 278 (YALGKKLGSG…LRRLLKDLFI (270 aa)) enclose the Protein kinase domain. ATP is bound by residues 15–23 (LGSGSFGDI) and lysine 38. Aspartate 128 (proton acceptor) is an active-site residue.

It belongs to the protein kinase superfamily. CK1 Ser/Thr protein kinase family. Casein kinase I subfamily. In terms of assembly, interacts with rhoptry protein RON3; the interaction is direct. Interacts with CK2alpha; the interaction is direct. Interacts with nucleosome assembly protein NAPL. Interacts with RAB5b. Interacts with host GAPVD1. Interacts with host SNX22. Mg(2+) serves as cofactor.

The protein localises to the cytoplasm. Its subcellular location is the cytoplasmic vesicle. It localises to the secretory vesicle. The protein resides in the microneme. It is found in the secreted. The protein localises to the host cell surface. The catalysed reaction is L-seryl-[protein] + ATP = O-phospho-L-seryl-[protein] + ADP + H(+). The enzyme catalyses L-threonyl-[protein] + ATP = O-phospho-L-threonyl-[protein] + ADP + H(+). Functionally, serine/threonine-protein kinase likely to be involved in many cellular processes. Phosphorylates rhoptry protein RON3, nucleosome assembly protein NAPL and DNA/RNA-binding protein ALBA4 in vitro. The protein is Casein kinase I of Plasmodium falciparum (isolate Dd2).